Here is a 311-residue protein sequence, read N- to C-terminus: uncharacterized protein (311 aa).

Over residues Met-1–Thr-12 the composition is skewed to polar residues. Disordered regions lie at residues Met-1 to His-44 and Glu-205 to His-268. Residues Thr-35–His-44 are compositionally biased toward basic and acidic residues.

The protein belongs to the HHV-5 HKLF1 family.

This is an uncharacterized protein from Human cytomegalovirus (strain AD169) (HHV-5).